We begin with the raw amino-acid sequence, 457 residues long: UDP-N-acetylmuramate--L-alanine ligase (457 aa).

Residue 109–115 (GTDGKTT) participates in ATP binding.

Belongs to the MurCDEF family.

Its subcellular location is the cytoplasm. It catalyses the reaction UDP-N-acetyl-alpha-D-muramate + L-alanine + ATP = UDP-N-acetyl-alpha-D-muramoyl-L-alanine + ADP + phosphate + H(+). It participates in cell wall biogenesis; peptidoglycan biosynthesis. In terms of biological role, cell wall formation. The sequence is that of UDP-N-acetylmuramate--L-alanine ligase from Thermotoga petrophila (strain ATCC BAA-488 / DSM 13995 / JCM 10881 / RKU-1).